A 593-amino-acid chain; its full sequence is NADH-quinone oxidoreductase subunit C/D (593 aa).

The NADH dehydrogenase I subunit C stretch occupies residues Met1–Gln184. The tract at residues Asp208–Arg593 is NADH dehydrogenase I subunit D.

This sequence in the N-terminal section; belongs to the complex I 30 kDa subunit family. In the C-terminal section; belongs to the complex I 49 kDa subunit family. NDH-1 is composed of 13 different subunits. Subunits NuoB, CD, E, F, and G constitute the peripheral sector of the complex.

It is found in the cell inner membrane. It catalyses the reaction a quinone + NADH + 5 H(+)(in) = a quinol + NAD(+) + 4 H(+)(out). Functionally, NDH-1 shuttles electrons from NADH, via FMN and iron-sulfur (Fe-S) centers, to quinones in the respiratory chain. The immediate electron acceptor for the enzyme in this species is believed to be ubiquinone. Couples the redox reaction to proton translocation (for every two electrons transferred, four hydrogen ions are translocated across the cytoplasmic membrane), and thus conserves the redox energy in a proton gradient. The polypeptide is NADH-quinone oxidoreductase subunit C/D (Pseudomonas paraeruginosa (strain DSM 24068 / PA7) (Pseudomonas aeruginosa (strain PA7))).